A 51-amino-acid chain; its full sequence is Epididymal sperm protein E (51 aa).

A zinc finger lies at Cys8–Cys39.

In terms of tissue distribution, sperm.

Its subcellular location is the nucleus. This is Epididymal sperm protein E from Sepia officinalis (Common cuttlefish).